Reading from the N-terminus, the 816-residue chain is Protein EFR3 homolog B (816 aa).

Positions serine 206–glutamine 219 are enriched in polar residues. Positions serine 206–glutamate 230 are disordered. The span at serine 221–glutamate 230 shows a compositional bias: basic and acidic residues.

Belongs to the EFR3 family. Component of a phosphatidylinositol 4-kinase (PI4K) complex. Post-translationally, palmitoylated at its N-terminus, anchoring the protein to the plasma membrane.

The protein resides in the cell membrane. Its function is as follows. Component of a complex required to localize phosphatidylinositol 4-kinase (PI4K) to the plasma membrane. The complex acts as a regulator of phosphatidylinositol 4-phosphate (PtdIns(4)P) synthesis. In the complex, efr3b probably acts as the membrane-anchoring component. In Danio rerio (Zebrafish), this protein is Protein EFR3 homolog B (efr3b).